Reading from the N-terminus, the 275-residue chain is Large ribosomal subunit protein uL2c (275 aa).

Residues 225–275 are disordered; it reads MNPCDHPHGGGEGRSPIGRPRPVSPWGKPALGQRTRKGHKYSDQMILRRRK.

Belongs to the universal ribosomal protein uL2 family. Part of the 50S ribosomal subunit.

It is found in the plastid. The protein resides in the chloroplast. In Oltmannsiellopsis viridis (Marine flagellate), this protein is Large ribosomal subunit protein uL2c (rpl2).